The chain runs to 672 residues: MHKVQFADVHFNAENTPVSAQFDDVYFSNQDGLAESHYIFQEGNQLWQRWQQTSEAHFVIAETGFGTGLNFFAVTQRFREFRLTYPDAPLKRLFFISFEKYPLPLAQLKRAHQAYPEFQSLAQQLQQSWLEPIVGCYRFHFAETTLDLWFGDMAENLPQLGDYMCNKIDAWFLDGFAPSKNPQMWQDTLYQHMYRYTKTQGTFSTFTAASAVRKGLIHAGFTVTKRKGYGKKRECLQGVKAQQQPADIHAPWALVQPAELTENADIALIGGGIASVFSALSLLERGAKVTVYCEDNSLAANASGNKQGAFYPQLSDDDLRYIRFYIHAFAYGKQRFNWAIEQGITFEHDFCGVALCAYDAKSAVKLAKISALQLPPSLYQPLSQQALSEQVGLPLPCDGGFIAQGAWLSPQQFVQNTFDFLATRGVIIKTQQKITALERQTTHWLLTTEQGDSFKHQVVVLANGHKLTQFRQTEHLPVYPVRGQVSEIATSTELSKLKAVICYDGYLTPKAASQTHCLGASHLRDNAERAFSLQEQQENQQKIQTNLASVDWVNEVDTRNNQARIGIRCSVRDRIPMLGNVPDFEQQLSDYHNLYNLRRRKHAIKHAALHPNLFLIGALGSRGLTSAPLLAETLASLIYHEPLPLSEDILHQLNANRSWIRKLLKGSQVKQG.

The segment at 1-241 (MHKVQFADVH…KRECLQGVKA (241 aa)) is tRNA (mnm(5)s(2)U34)-methyltransferase. The FAD-dependent cmnm(5)s(2)U34 oxidoreductase stretch occupies residues 269 to 672 (IGGGIASVFS…LLKGSQVKQG (404 aa)).

The protein in the N-terminal section; belongs to the methyltransferase superfamily. tRNA (mnm(5)s(2)U34)-methyltransferase family. In the C-terminal section; belongs to the DAO family. It depends on FAD as a cofactor.

The protein localises to the cytoplasm. It carries out the reaction 5-aminomethyl-2-thiouridine(34) in tRNA + S-adenosyl-L-methionine = 5-methylaminomethyl-2-thiouridine(34) in tRNA + S-adenosyl-L-homocysteine + H(+). Its function is as follows. Catalyzes the last two steps in the biosynthesis of 5-methylaminomethyl-2-thiouridine (mnm(5)s(2)U) at the wobble position (U34) in tRNA. Catalyzes the FAD-dependent demodification of cmnm(5)s(2)U34 to nm(5)s(2)U34, followed by the transfer of a methyl group from S-adenosyl-L-methionine to nm(5)s(2)U34, to form mnm(5)s(2)U34. This is tRNA 5-methylaminomethyl-2-thiouridine biosynthesis bifunctional protein MnmC from Pasteurella multocida (strain Pm70).